A 382-amino-acid polypeptide reads, in one-letter code: MNLKEKTRALFAEIFGYPATHTIQAPGRVNLIGEHTDYNDGFVLPCAIDYQTVISCAPRDDRTVRVIAADYDNQVDEFSLDAPIVTHDSQQWSNYVRGVVKHLQQRNNAFGGVDMVISGNVPQGAGLSSSASLEVAVGTVFQQLYHLPLDGAQIALNGQEAENQFVGCNCGIMDQLISALGKKDHALLIDCRTLGAKAVSMPKGVAVVIINSNFKRTLVGSEYNTHREQCETGARFFQQPALRDVSLEAFNAVASELDPVVAKRVRHVLSENARTVEAASALEKGDLQRMGQLMAESHASMRDDFEITVPQIDTLVDIVKATIGDQGGVRMTGGGFGGCVVALIPEDLVPAVQQAVAQQYEAKTGIKETFYVCKPSQGAGQC.

34–37 (EHTD) is a substrate binding site. 124-130 (GAGLSSS) serves as a coordination point for ATP. Mg(2+)-binding residues include Ser130 and Glu162. Asp174 serves as the catalytic Proton acceptor. Residue Tyr223 coordinates substrate.

This sequence belongs to the GHMP kinase family. GalK subfamily.

Its subcellular location is the cytoplasm. The enzyme catalyses alpha-D-galactose + ATP = alpha-D-galactose 1-phosphate + ADP + H(+). The protein operates within carbohydrate metabolism; galactose metabolism. Functionally, catalyzes the transfer of the gamma-phosphate of ATP to D-galactose to form alpha-D-galactose-1-phosphate (Gal-1-P). This Salmonella gallinarum (strain 287/91 / NCTC 13346) protein is Galactokinase.